The sequence spans 359 residues: 3-dehydroquinate synthase (359 aa).

Residues 71-76 (DGEQYK), 105-109 (GVIGD), 129-130 (TT), Lys-142, Lys-151, and 169-172 (CLST) contribute to the NAD(+) site. Residues Glu-184, His-247, and His-264 each contribute to the Zn(2+) site.

The protein belongs to the sugar phosphate cyclases superfamily. Dehydroquinate synthase family. Co(2+) serves as cofactor. The cofactor is Zn(2+). NAD(+) is required as a cofactor.

It localises to the cytoplasm. It carries out the reaction 7-phospho-2-dehydro-3-deoxy-D-arabino-heptonate = 3-dehydroquinate + phosphate. It functions in the pathway metabolic intermediate biosynthesis; chorismate biosynthesis; chorismate from D-erythrose 4-phosphate and phosphoenolpyruvate: step 2/7. Catalyzes the conversion of 3-deoxy-D-arabino-heptulosonate 7-phosphate (DAHP) to dehydroquinate (DHQ). The polypeptide is 3-dehydroquinate synthase (Shewanella piezotolerans (strain WP3 / JCM 13877)).